The sequence spans 1358 residues: Phosphoinositide 3-kinase regulatory subunit 4 (1358 aa).

The N-myristoyl glycine moiety is linked to residue glycine 2. Residues 26-324 form the Protein kinase domain; sequence FEYDKSLGST…AFPEIFYTFL (299 aa). ATP contacts are provided by residues 32–40 and lysine 53; that span reads LGSTRFFKV. Residue aspartate 148 is the Proton acceptor of the active site. HEAT repeat units follow at residues 413–450, 458–495, and 572–610; these read ILLD…LVKE, IYPE…TALR, and KAND…YVGW. A phosphoserine mark is found at serine 808, serine 813, serine 853, and serine 865. Residues 875-898 form a disordered region; that stretch reads LPKGSDQEVIQTGKPPRSESSAGI. WD repeat units lie at residues 991 to 1030, 1040 to 1079, 1093 to 1134, 1139 to 1178, 1182 to 1223, and 1237 to 1278; these read EHKS…GKTT, RIGG…LPKS, KEDG…NAWT, LKSG…PISS, PSRA…RRFT, and PSPH…RSYV. The disordered stretch occupies residues 1307–1326; that stretch reads KQKVGPSDDTPRRGPESLPV. Basic and acidic residues predominate over residues 1315 to 1326; sequence DTPRRGPESLPV. The residue at position 1316 (threonine 1316) is a Phosphothreonine. The WD 7 repeat unit spans residues 1327-1358; sequence GHHDIITDVATFQTTQGFIVTASRDGIVKVWK.

The protein belongs to the protein kinase superfamily. Ser/Thr protein kinase family. As to quaternary structure, component of the PI3K (PI3KC3/PI3K-III/class III phosphatidylinositol 3-kinase) complex the core of which is composed of the catalytic subunit PIK3C3, the regulatory subunit PIK3R4 and BECN1 associating with additional regulatory/auxiliary subunits to form alternative complex forms. Alternative complex forms containing a fourth regulatory subunit in a mutually exclusive manner are PI3K complex I (PI3KC3-C1) containing ATG14, and PI3K complex II (PI3KC3-C2) containing UVRAG. PI3KC3-C1 displays a V-shaped architecture with PIK3R4 serving as a bridge between PIK3C3 and the ATG14:BECN1 subcomplex. Both, PI3KC3-C1 and PI3KC3-C2, can associate with further regulatory subunits, such as RUBCN, SH3GLB1/Bif-1, AMBRA1 and NRBF2. PI3KC3-C1 probably associates with PIK3CB. Interacts with RAB7A in the presence of PIK3C3/VPS34. Interacts with NRBF2. Interacts with ARMC3. Mn(2+) serves as cofactor. In terms of processing, myristoylated. Post-translationally, probably autophosphorylated. Ubiquitously expressed.

Its subcellular location is the late endosome. The protein localises to the cytoplasmic vesicle. It is found in the autophagosome. The protein resides in the membrane. It catalyses the reaction L-seryl-[protein] + ATP = O-phospho-L-seryl-[protein] + ADP + H(+). The catalysed reaction is L-threonyl-[protein] + ATP = O-phospho-L-threonyl-[protein] + ADP + H(+). Its function is as follows. Regulatory subunit of the PI3K complex that mediates formation of phosphatidylinositol 3-phosphate; different complex forms are believed to play a role in multiple membrane trafficking pathways: PI3KC3-C1 is involved in initiation of autophagosomes and PI3KC3-C2 in maturation of autophagosomes and endocytosis. Involved in regulation of degradative endocytic trafficking and cytokinesis, probably in the context of PI3KC3-C2. The protein is Phosphoinositide 3-kinase regulatory subunit 4 (PIK3R4) of Homo sapiens (Human).